We begin with the raw amino-acid sequence, 394 residues long: Probable nucleoredoxin 2 (394 aa).

Thioredoxin domains follow at residues G15–E176 and S180–D327.

This sequence belongs to the nucleoredoxin family.

It carries out the reaction [protein]-dithiol + NAD(+) = [protein]-disulfide + NADH + H(+). It catalyses the reaction [protein]-dithiol + NADP(+) = [protein]-disulfide + NADPH + H(+). Probable thiol-disulfide oxidoreductase that may participate in various redox reactions. The protein is Probable nucleoredoxin 2 of Oryza sativa subsp. japonica (Rice).